The following is a 383-amino-acid chain: Putative [LysW]-aminoadipate semialdehyde/glutamate semialdehyde transaminase (383 aa).

Pyridoxal 5'-phosphate-binding positions include 97-98 (GT) and Phe124. Arg127 lines the substrate pocket. 209 to 212 (DEVQ) provides a ligand contact to pyridoxal 5'-phosphate. At Lys238 the chain carries N6-(pyridoxal phosphate)lysine. Residue Ser266 participates in substrate binding. Pyridoxal 5'-phosphate is bound at residue Thr267.

It belongs to the class-III pyridoxal-phosphate-dependent aminotransferase family. LysJ subfamily. In terms of assembly, homodimer. Requires pyridoxal 5'-phosphate as cofactor.

It localises to the cytoplasm. It catalyses the reaction [amino-group carrier protein]-C-terminal-gamma-(L-lysyl)-L-glutamate + 2-oxoglutarate = [amino-group carrier protein]-C-terminal-N-(1-carboxy-5-oxopentan-1-yl)-L-glutamine + L-glutamate. The enzyme catalyses [amino-group carrier protein]-C-terminal-gamma-(L-ornithyl)-L-glutamate + 2-oxoglutarate = [amino-group carrier protein]-C-terminal-gamma-(L-glutamyl-5-semialdehyde)-L-glutamate + L-glutamate. The protein operates within amino-acid biosynthesis; L-lysine biosynthesis via AAA pathway; L-lysine from L-alpha-aminoadipate (Thermus route): step 4/5. Its pathway is amino-acid biosynthesis; L-arginine biosynthesis. Involved in both the arginine and lysine biosynthetic pathways. The polypeptide is Putative [LysW]-aminoadipate semialdehyde/glutamate semialdehyde transaminase (Pyrobaculum aerophilum (strain ATCC 51768 / DSM 7523 / JCM 9630 / CIP 104966 / NBRC 100827 / IM2)).